Reading from the N-terminus, the 292-residue chain is Phosphatidylserine decarboxylase proenzyme (292 aa).

Catalysis depends on charge relay system; for autoendoproteolytic cleavage activity residues Asp-92, His-149, and Ser-256. The active-site Schiff-base intermediate with substrate; via pyruvic acid; for decarboxylase activity is Ser-256. Ser-256 carries the pyruvic acid (Ser); by autocatalysis modification.

It belongs to the phosphatidylserine decarboxylase family. PSD-B subfamily. Prokaryotic type I sub-subfamily. In terms of assembly, heterodimer of a large membrane-associated beta subunit and a small pyruvoyl-containing alpha subunit. Requires pyruvate as cofactor. In terms of processing, is synthesized initially as an inactive proenzyme. Formation of the active enzyme involves a self-maturation process in which the active site pyruvoyl group is generated from an internal serine residue via an autocatalytic post-translational modification. Two non-identical subunits are generated from the proenzyme in this reaction, and the pyruvate is formed at the N-terminus of the alpha chain, which is derived from the carboxyl end of the proenzyme. The autoendoproteolytic cleavage occurs by a canonical serine protease mechanism, in which the side chain hydroxyl group of the serine supplies its oxygen atom to form the C-terminus of the beta chain, while the remainder of the serine residue undergoes an oxidative deamination to produce ammonia and the pyruvoyl prosthetic group on the alpha chain. During this reaction, the Ser that is part of the protease active site of the proenzyme becomes the pyruvoyl prosthetic group, which constitutes an essential element of the active site of the mature decarboxylase.

It is found in the cell membrane. It carries out the reaction a 1,2-diacyl-sn-glycero-3-phospho-L-serine + H(+) = a 1,2-diacyl-sn-glycero-3-phosphoethanolamine + CO2. It functions in the pathway phospholipid metabolism; phosphatidylethanolamine biosynthesis; phosphatidylethanolamine from CDP-diacylglycerol: step 2/2. Functionally, catalyzes the formation of phosphatidylethanolamine (PtdEtn) from phosphatidylserine (PtdSer). This Baumannia cicadellinicola subsp. Homalodisca coagulata protein is Phosphatidylserine decarboxylase proenzyme.